The chain runs to 372 residues: ATP-sensitive inward rectifier potassium channel 1 (372 aa).

The Cytoplasmic segment spans residues 1–58; that stretch reads MFKHLRRWFVTHIFGRSRQRARLVSKDGRCNIEFGNVDAQSRFIFFVDIWTTVLDLKW. Position 25 is a phosphoserine; by SGK1 (Ser-25). The chain crosses the membrane as a helical span at residues 59-83; sequence RYKMTVFITAFLGSWFLFGLLWYVV. Residues 84 to 108 are Extracellular-facing; that stretch reads AYVHKDLPEFYPPDNRTPCVENING. Asn-98 carries N-linked (GlcNAc...) asparagine glycosylation. Residues 109–120 constitute an intramembrane region (helical; Pore-forming); the sequence is MTSAFLFSLETQ. The segment at residues 121-127 is an intramembrane region (pore-forming); it reads VTIGYGF. The Selectivity filter motif lies at 122–127; that stretch reads TIGYGF. The Extracellular segment spans residues 128–136; it reads RFVTEQCAT. The chain crosses the membrane as a helical span at residues 137-158; that stretch reads AIFLLIFQSILGVIINSFMCGA. The Cytoplasmic segment spans residues 159-372; it reads ILAKISRPKK…EVDETDDTQM (214 aa). The interval 161 to 188 is polyphosphoinositide (PIP2)-binding; that stretch reads AKISRPKKRAKTITFSKNAVISKRGGKL. 204–211 serves as a coordination point for ATP; sequence GSHIYGKL.

This sequence belongs to the inward rectifier-type potassium channel (TC 1.A.2.1) family. KCNJ1 subfamily. As to quaternary structure, interacts with SGK1 and SLC9A3R2/NHERF2. Post-translationally, phosphorylation at Ser-25 by SGK1 is necessary for its expression at the cell membrane.

The protein localises to the cell membrane. It carries out the reaction K(+)(in) = K(+)(out). With respect to regulation, inhibited by WNK3. Activated by phosphatidylinositol 4,5 biphosphate (PtdIns(4,5)P2). Its function is as follows. Inward rectifier potassium channels are characterized by a greater tendency to allow potassium to flow into the cell rather than out of it. Their voltage dependence is regulated by the concentration of extracellular potassium; as external potassium is raised, the voltage range of the channel opening shifts to more positive voltages. The inward rectification is mainly due to the blockage of outward current by internal magnesium. This channel is activated by internal ATP and can be blocked by external barium. In the kidney, probably plays a major role in potassium homeostasis. The protein is ATP-sensitive inward rectifier potassium channel 1 (Kcnj1) of Mus musculus (Mouse).